A 361-amino-acid polypeptide reads, in one-letter code: S-adenosylmethionine:tRNA ribosyltransferase-isomerase (361 aa).

This sequence belongs to the QueA family. In terms of assembly, monomer.

Its subcellular location is the cytoplasm. It catalyses the reaction 7-aminomethyl-7-carbaguanosine(34) in tRNA + S-adenosyl-L-methionine = epoxyqueuosine(34) in tRNA + adenine + L-methionine + 2 H(+). Its pathway is tRNA modification; tRNA-queuosine biosynthesis. Functionally, transfers and isomerizes the ribose moiety from AdoMet to the 7-aminomethyl group of 7-deazaguanine (preQ1-tRNA) to give epoxyqueuosine (oQ-tRNA). This is S-adenosylmethionine:tRNA ribosyltransferase-isomerase from Actinobacillus pleuropneumoniae serotype 3 (strain JL03).